Reading from the N-terminus, the 453-residue chain is Homogentisate 1,2-dioxygenase (453 aa).

Residue histidine 304 is the Proton acceptor of the active site. Residues histidine 347 and glutamate 353 each coordinate Fe cation. Tyrosine 362 and histidine 383 together coordinate homogentisate. Histidine 383 contacts Fe cation.

Belongs to the homogentisate dioxygenase family. In terms of assembly, hexamer; dimer of trimers. Requires Fe cation as cofactor.

It catalyses the reaction homogentisate + O2 = 4-maleylacetoacetate + H(+). It functions in the pathway amino-acid degradation; L-phenylalanine degradation; acetoacetate and fumarate from L-phenylalanine: step 4/6. In terms of biological role, involved in the catabolism of homogentisate (2,5-dihydroxyphenylacetate or 2,5-OH-PhAc), a central intermediate in the degradation of phenylalanine and tyrosine. Catalyzes the oxidative ring cleavage of the aromatic ring of homogentisate to yield maleylacetoacetate. In Sinorhizobium fredii (strain NBRC 101917 / NGR234), this protein is Homogentisate 1,2-dioxygenase.